We begin with the raw amino-acid sequence, 223 residues long: Ribose-5-phosphate isomerase A (223 aa).

Residues 26 to 29 (TGST), 82 to 85 (DGAD), and 95 to 98 (KGGG) each bind substrate. The active-site Proton acceptor is the Glu104. Lys122 contributes to the substrate binding site.

This sequence belongs to the ribose 5-phosphate isomerase family. Homodimer.

The enzyme catalyses aldehydo-D-ribose 5-phosphate = D-ribulose 5-phosphate. Its pathway is carbohydrate degradation; pentose phosphate pathway; D-ribose 5-phosphate from D-ribulose 5-phosphate (non-oxidative stage): step 1/1. Catalyzes the reversible conversion of ribose-5-phosphate to ribulose 5-phosphate. The chain is Ribose-5-phosphate isomerase A from Streptococcus agalactiae serotype V (strain ATCC BAA-611 / 2603 V/R).